The primary structure comprises 199 residues: NAD(P)H dehydrogenase (quinone) (199 aa).

Residues 4-190 form the Flavodoxin-like domain; sequence VLVLYHSMYG…AIARFQGKHV (187 aa). FMN contacts are provided by residues 10–15 and 79–81; these read SMYGHI and TRF. Position 12 (Y12) interacts with NAD(+). Substrate is bound at residue W99. Position 134 (H134) interacts with FMN.

Belongs to the WrbA family. Requires FMN as cofactor.

It catalyses the reaction a quinone + NADH + H(+) = a quinol + NAD(+). It carries out the reaction a quinone + NADPH + H(+) = a quinol + NADP(+). The protein is NAD(P)H dehydrogenase (quinone) of Tolumonas auensis (strain DSM 9187 / NBRC 110442 / TA 4).